A 407-amino-acid chain; its full sequence is Aminoacylase-1 (407 aa).

N-acetylalanine is present on A2. Residue H80 coordinates Zn(2+). D82 is a catalytic residue. D113 is a binding site for Zn(2+). E147 serves as the catalytic Proton acceptor. 3 residues coordinate Zn(2+): E148, E175, and H372.

The protein belongs to the peptidase M20A family. In terms of assembly, homodimer. Interacts with SPHK1. The cofactor is Zn(2+).

It is found in the cytoplasm. The enzyme catalyses an N-acyl-L-amino acid + H2O = an L-alpha-amino acid + a carboxylate. The catalysed reaction is N-acetyl-L-methionine + H2O = L-methionine + acetate. It carries out the reaction N-acetyl-L-glutamine + H2O = L-glutamine + acetate. Its function is as follows. Catalyzes the hydrolysis of N-acetylated amino acids to acetate and free amino acids. This chain is Aminoacylase-1 (ACY1), found in Sus scrofa (Pig).